Here is a 442-residue protein sequence, read N- to C-terminus: Dol-P-Man:Man(5)GlcNAc(2)-PP-Dol alpha-1,3-mannosyltransferase (442 aa).

The Lumenal portion of the chain corresponds to 1-34 (MAAPSSRPESNPPLYKQALDFALDVANGRHALSK). Residues 35-55 (LIPPALFLVDALLCGLIIWKV) traverse the membrane as a helical segment. Over 56-84 (PYTEIDWAAYMEQVSQILSGERDYTKVRG) the chain is Cytoplasmic. The chain crosses the membrane as a helical span at residues 85–105 (GTGPLVYPAAHVYIYTGLYHL). Topologically, residues 106–111 (TDEGRN) are lumenal. Residues 112 to 132 (ILLAQQLFAGLYMVTLAVVMG) form a helical membrane-spanning segment. Residues 133–155 (CYWQAKAPPYLFPLLTLSKRLHS) are Cytoplasmic-facing. The helical transmembrane segment at 156 to 176 (IFVLRCFNDCFAVLFLWLAIF) threads the bilayer. The Lumenal portion of the chain corresponds to 177–198 (FFQRRNWQAGALLYTLGLGVKM). The helical transmembrane segment at 199–219 (TLLLSLPAVGIVLFLGSGSFV) threads the bilayer. Residue T220 is a topological domain, cytoplasmic. A helical membrane pass occupies residues 221–241 (TLQLVATMGLVQILIGVPFLA). Over 242–272 (HYPTEYLSRAFELSRQFFFKWTVNWRFVGEE) the chain is Lumenal. The helical transmembrane segment at 273–293 (IFLSKGFALTLLALHVLVLGI) threads the bilayer. Residues 294-333 (FITTRWIKPARKSLVQLISPVLLAGKPPLTVPEHRAAARD) are Cytoplasmic-facing. Residues 334–354 (VTPRYIMTTILSANAVGLLFA) form a helical membrane-spanning segment. The Lumenal portion of the chain corresponds to 355–376 (RSLHYQFYAYVAWSTPFLLWRA). Residues 377–397 (GLHPVLVYLLWAVHEWAWNVF) traverse the membrane as a helical segment. Topologically, residues 398-401 (PSTP) are cytoplasmic. The helical transmembrane segment at 402 to 422 (ASSAVVVGVLGVTVAGVWFGA) threads the bilayer. Residues 423 to 442 (REEWEPGMKSSSKKEEAAMR) are Lumenal-facing.

The protein belongs to the glycosyltransferase ALG3 family.

The protein resides in the endoplasmic reticulum membrane. It catalyses the reaction an alpha-D-Man-(1-&gt;2)-alpha-D-Man-(1-&gt;2)-alpha-D-Man-(1-&gt;3)-[alpha-D-Man-(1-&gt;6)]-beta-D-Man-(1-&gt;4)-beta-D-GlcNAc-(1-&gt;4)-alpha-D-GlcNAc-diphospho-di-trans,poly-cis-dolichol + a di-trans,poly-cis-dolichyl beta-D-mannosyl phosphate = an alpha-D-Man-(1-&gt;2)-alpha-D-Man-(1-&gt;2)-alpha-D-Man-(1-&gt;3)-[alpha-D-Man-(1-&gt;3)-alpha-D-Man-(1-&gt;6)]-beta-D-Man-(1-&gt;4)-beta-D-GlcNAc-(1-&gt;4)-alpha-D-GlcNAc-diphospho-di-trans,poly-cis-dolichol + a di-trans,poly-cis-dolichyl phosphate + H(+). Its pathway is protein modification; protein glycosylation. In terms of biological role, dol-P-Man:Man(5)GlcNAc(2)-PP-Dol alpha-1,3-mannosyltransferase that operates in the biosynthetic pathway of dolichol-linked oligosaccharides, the glycan precursors employed in protein asparagine (N)-glycosylation. The assembly of dolichol-linked oligosaccharides begins on the cytosolic side of the endoplasmic reticulum membrane and finishes in its lumen. The sequential addition of sugars to dolichol pyrophosphate produces dolichol-linked oligosaccharides containing fourteen sugars, including two GlcNAcs, nine mannoses and three glucoses. Once assembled, the oligosaccharide is transferred from the lipid to nascent proteins by oligosaccharyltransferases. In the lumen of the endoplasmic reticulum, adds the first dolichyl beta-D-mannosyl phosphate derived mannose in an alpha-1,3 linkage to Man(5)GlcNAc(2)-PP-dolichol to produce Man(6)GlcNAc(2)-PP-dolichol. The sequence is that of Dol-P-Man:Man(5)GlcNAc(2)-PP-Dol alpha-1,3-mannosyltransferase (alg-3) from Neurospora crassa (strain ATCC 24698 / 74-OR23-1A / CBS 708.71 / DSM 1257 / FGSC 987).